The primary structure comprises 148 residues: MFNKKVLKHNLAEMNPKELIKFIKHEFPINGQDYHTHARKVQIIKSLSPSELSSAIARMEGIKSQYDPSKTWGIGSLILGTSFIGFQVLFGVNISKITEGNRLNALIYVLITIIICLWTLRNIIKDKENATTADYLKELLIQIKSEKN.

The next 2 membrane-spanning stretches (helical) occupy residues Trp72–Val92 and Asn104–Ile124.

It is found in the cell membrane. This Bacillus subtilis (strain 168) protein is SPbeta prophage-derived uncharacterized protein YomK (yomK).